The sequence spans 230 residues: Magnesium-protoporphyrin O-methyltransferase (230 aa).

This sequence belongs to the class I-like SAM-binding methyltransferase superfamily. Magnesium protoporphyrin O-methyltransferase family.

The enzyme catalyses Mg-protoporphyrin IX + S-adenosyl-L-methionine = Mg-protoporphyrin IX 13-monomethyl ester + S-adenosyl-L-homocysteine. It functions in the pathway porphyrin-containing compound metabolism; chlorophyll biosynthesis (light-independent). Converts Mg-protoporphyrin IX to Mg-protoporphyrin IX methylester using S-adenosyl-L-methionine as a cofactor. This is Magnesium-protoporphyrin O-methyltransferase (chlM) from Synechocystis sp. (strain ATCC 27184 / PCC 6803 / Kazusa).